The following is a 416-amino-acid chain: L-threonine dehydratase biosynthetic IlvA (416 aa).

Lys-51 bears the N6-(pyridoxal phosphate)lysine mark. Pyridoxal 5'-phosphate is bound by residues Asn-78, 184-188, and Ser-309; that span reads GGGGL. Residues 333-407 form the ACT-like domain; that stretch reads HYFVINFPQR…FDNRYVNLHG (75 aa).

The protein belongs to the serine/threonine dehydratase family. In terms of assembly, homotetramer. Requires pyridoxal 5'-phosphate as cofactor.

The catalysed reaction is L-threonine = 2-oxobutanoate + NH4(+). Its pathway is amino-acid biosynthesis; L-isoleucine biosynthesis; 2-oxobutanoate from L-threonine: step 1/1. Its function is as follows. Catalyzes the anaerobic formation of alpha-ketobutyrate and ammonia from threonine in a two-step reaction. The first step involved a dehydration of threonine and a production of enamine intermediates (aminocrotonate), which tautomerizes to its imine form (iminobutyrate). Both intermediates are unstable and short-lived. The second step is the nonenzymatic hydrolysis of the enamine/imine intermediates to form 2-ketobutyrate and free ammonia. In the low water environment of the cell, the second step is accelerated by RidA. This Lactococcus lactis subsp. lactis (strain IL1403) (Streptococcus lactis) protein is L-threonine dehydratase biosynthetic IlvA (ilvA).